A 259-amino-acid chain; its full sequence is Hydroxyethylthiazole kinase 1 (259 aa).

M38 lines the substrate pocket. Residues R113 and S158 each coordinate ATP. G185 is a binding site for substrate.

Belongs to the Thz kinase family. Mg(2+) is required as a cofactor.

The catalysed reaction is 5-(2-hydroxyethyl)-4-methylthiazole + ATP = 4-methyl-5-(2-phosphooxyethyl)-thiazole + ADP + H(+). It participates in cofactor biosynthesis; thiamine diphosphate biosynthesis; 4-methyl-5-(2-phosphoethyl)-thiazole from 5-(2-hydroxyethyl)-4-methylthiazole: step 1/1. Catalyzes the phosphorylation of the hydroxyl group of 4-methyl-5-beta-hydroxyethylthiazole (THZ). This chain is Hydroxyethylthiazole kinase 1, found in Leuconostoc mesenteroides subsp. mesenteroides (strain ATCC 8293 / DSM 20343 / BCRC 11652 / CCM 1803 / JCM 6124 / NCDO 523 / NBRC 100496 / NCIMB 8023 / NCTC 12954 / NRRL B-1118 / 37Y).